The sequence spans 136 residues: 1,4-dihydroxy-2-naphthoyl-CoA hydrolase (136 aa).

The active-site Nucleophile or proton acceptor is the E63. Residues G82, 89–92 (HVRS), and 106–111 (HLGSRH) contribute to the substrate site.

It belongs to the thioesterase PaaI family. In terms of assembly, homotetramer. Dimer of dimers.

The catalysed reaction is 1,4-dihydroxy-2-naphthoyl-CoA + H2O = 1,4-dihydroxy-2-naphthoate + CoA + H(+). It participates in quinol/quinone metabolism; 1,4-dihydroxy-2-naphthoate biosynthesis; 1,4-dihydroxy-2-naphthoate from chorismate: step 7/7. It functions in the pathway quinol/quinone metabolism; menaquinone biosynthesis. Catalyzes the hydrolysis of 1,4-dihydroxy-2-naphthoyl-CoA (DHNA-CoA) to 1,4-dihydroxy-2-naphthoate (DHNA). Also shows significant activity toward a wide range of acyl-CoA thioesters, and minimal activity toward benzoyl-holoEntB. This Escherichia coli (strain K12) protein is 1,4-dihydroxy-2-naphthoyl-CoA hydrolase.